The following is a 121-amino-acid chain: Small ribosomal subunit protein bS16m (121 aa).

Belongs to the bacterial ribosomal protein bS16 family. As to quaternary structure, component of the mitochondrial small ribosomal subunit (mt-SSU). Mature yeast 74S mitochondrial ribosomes consist of a small (37S) and a large (54S) subunit. The 37S small subunit contains a 15S ribosomal RNA (15S mt-rRNA) and 34 different proteins. The 54S large subunit contains a 21S rRNA (21S mt-rRNA) and 46 different proteins.

The protein localises to the mitochondrion. Its function is as follows. Component of the mitochondrial ribosome (mitoribosome), a dedicated translation machinery responsible for the synthesis of mitochondrial genome-encoded proteins, including at least some of the essential transmembrane subunits of the mitochondrial respiratory chain. The mitoribosomes are attached to the mitochondrial inner membrane and translation products are cotranslationally integrated into the membrane. The chain is Small ribosomal subunit protein bS16m (MRPS16) from Saccharomyces cerevisiae (strain ATCC 204508 / S288c) (Baker's yeast).